The sequence spans 349 residues: Protein-glutamate methylesterase/protein-glutamine glutaminase (349 aa).

The Response regulatory domain maps to 5–122 (RVLSVDDSAL…REGMLAYSEM (118 aa)). A 4-aspartylphosphate modification is found at aspartate 56. One can recognise a CheB-type methylesterase domain in the interval 152-344 (LLSSEKLIAI…QQMLAKISAG (193 aa)). Catalysis depends on residues serine 164, histidine 190, and aspartate 286.

This sequence belongs to the CheB family. Post-translationally, phosphorylated by CheA. Phosphorylation of the N-terminal regulatory domain activates the methylesterase activity.

The protein localises to the cytoplasm. The catalysed reaction is [protein]-L-glutamate 5-O-methyl ester + H2O = L-glutamyl-[protein] + methanol + H(+). It carries out the reaction L-glutaminyl-[protein] + H2O = L-glutamyl-[protein] + NH4(+). In terms of biological role, involved in chemotaxis. Part of a chemotaxis signal transduction system that modulates chemotaxis in response to various stimuli. Catalyzes the demethylation of specific methylglutamate residues introduced into the chemoreceptors (methyl-accepting chemotaxis proteins or MCP) by CheR. Also mediates the irreversible deamidation of specific glutamine residues to glutamic acid. The polypeptide is Protein-glutamate methylesterase/protein-glutamine glutaminase (Escherichia coli O6:K15:H31 (strain 536 / UPEC)).